Here is a 1133-residue protein sequence, read N- to C-terminus: Early transcription factor large subunit homolog (1133 aa).

Residues 52-352 (KGGRAFFPCD…PNGQPLQRQQ (301 aa)) form the Helicase ATP-binding domain. 99–106 (WQTGTGKS) is an ATP binding site. The short motif at 281-284 (DEIH) is the DEAH box element. Residues 524 to 724 (MMKDILSIIR…EGDKALRKHA (201 aa)) enclose the Helicase C-terminal domain.

It belongs to the DEAD box helicase family. DEAH subfamily.

It localises to the virion. It catalyses the reaction ATP + H2O = ADP + phosphate + H(+). In terms of biological role, putative initation factor. In Ornithodoros (relapsing fever ticks), this protein is Early transcription factor large subunit homolog.